The primary structure comprises 93 residues: Bacterial microcompartment shell protein PduA (93 aa).

The 85-residue stretch at 5 to 89 (ALGMVETKGL…PHTDVEKILP (85 aa)) folds into the BMC domain.

This sequence belongs to the bacterial microcompartments protein family. As to quaternary structure, homohexamer with a central pore; Lys-26 and Arg-79 interactions are very important for hexamer symmetry. The hexamers pack against each other in arrays. Interacts individually with shell proteins PduB, PduB', PduJ, PduK, PduN and PduU. Modeling suggests PduC, PduD, PduE, PduL and PduP interact with a cleft formed by the C-terminal segments of 2 adjacent PduA subunits (on the BMC luminal side) in the hexamer.

Its subcellular location is the bacterial microcompartment. It participates in polyol metabolism; 1,2-propanediol degradation. In terms of biological role, one of the major shell proteins of the bacterial microcompartment (BMC) dedicated to 1,2-propanediol (1,2-PD) degradation, probably important for metabolite diffusion into and out of the BMC. Overexpression of a C-terminally mutated form (PduA*) makes thin parallel filaments with a honeycomb-like assembly in cross-section that probably form nanotubes. The filaments interfere with septation. PduA is probably the hub for binding multiple enzymes to the interior of the BMC. At least one of PduA or PduJ is required for BMC assembly; it must be encoded as the first gene in the pdu operon. Functionally, expression of a cosmid containing the full 21-gene pdu operon in E.coli allows E.coli to grow on 1,2-PD with the appearance of BMCs in its cytoplasm. Overexpression of this protein leads to aberrant intracellular filaments. The 1,2-PD-specific bacterial microcompartment (BMC) concentrates low levels of 1,2-PD catabolic enzymes, concentrates volatile reaction intermediates thus enhancing pathway flux and keeps the level of toxic, mutagenic propionaldehyde low. The sequence is that of Bacterial microcompartment shell protein PduA from Citrobacter freundii.